The sequence spans 171 residues: 3-hydroxydecanoyl-[acyl-carrier-protein] dehydratase (171 aa).

His70 is a catalytic residue.

Belongs to the thioester dehydratase family. FabA subfamily. In terms of assembly, homodimer.

It localises to the cytoplasm. It carries out the reaction a (3R)-hydroxyacyl-[ACP] = a (2E)-enoyl-[ACP] + H2O. The enzyme catalyses (3R)-hydroxydecanoyl-[ACP] = (2E)-decenoyl-[ACP] + H2O. It catalyses the reaction (2E)-decenoyl-[ACP] = (3Z)-decenoyl-[ACP]. It functions in the pathway lipid metabolism; fatty acid biosynthesis. Its function is as follows. Necessary for the introduction of cis unsaturation into fatty acids. Catalyzes the dehydration of (3R)-3-hydroxydecanoyl-ACP to E-(2)-decenoyl-ACP and then its isomerization to Z-(3)-decenoyl-ACP. Can catalyze the dehydratase reaction for beta-hydroxyacyl-ACPs with saturated chain lengths up to 16:0, being most active on intermediate chain length. This is 3-hydroxydecanoyl-[acyl-carrier-protein] dehydratase from Pseudoalteromonas translucida (strain TAC 125).